Here is a 244-residue protein sequence, read N- to C-terminus: MFYTLPKQLEINNLTVSYPHGTVLQNIFLTIESGKLIGIIGPNGAGKSTLLKTIIEQIKPISGEIFYQGAPLKNQRARIGYVPQRAQVDWDFPINVWDVVMMARLKKIGWFSSYSKKSYECVKAALEKVDMLKYKDRNIRELSGGQQQRVFLARLLAQEADLLLLDEPFTGVDFQTQKIIFSLLKEQIASNKIVIVIHHDLGESIINFDELILLNKKIISHDLTTKILNSKKLSTLFGEHIYAN.

In terms of domain architecture, ABC transporter spans 9–241 (LEINNLTVSY…KLSTLFGEHI (233 aa)). 41 to 48 (GPNGAGKS) contributes to the ATP binding site.

Belongs to the ABC transporter superfamily.

Its subcellular location is the plastid. It is found in the cyanelle. This Cyanophora paradoxa protein is Probable ABC transporter ATP-binding protein in ycf23-apcF intergenic region.